The sequence spans 424 residues: Phosphomethylpyrimidine synthase (424 aa).

Residues asparagine 66, methionine 95, tyrosine 124, histidine 163, 185-187 (SRG), 226-229 (DGMR), and glutamate 265 contribute to the substrate site. Histidine 269 serves as a coordination point for Zn(2+). Phenylalanine 292 provides a ligand contact to substrate. Histidine 333 contacts Zn(2+). Positions 408, 411, and 415 each coordinate [4Fe-4S] cluster.

The protein belongs to the ThiC family. [4Fe-4S] cluster is required as a cofactor.

The enzyme catalyses 5-amino-1-(5-phospho-beta-D-ribosyl)imidazole + S-adenosyl-L-methionine = 4-amino-2-methyl-5-(phosphooxymethyl)pyrimidine + CO + 5'-deoxyadenosine + formate + L-methionine + 3 H(+). The protein operates within cofactor biosynthesis; thiamine diphosphate biosynthesis. Functionally, catalyzes the synthesis of the hydroxymethylpyrimidine phosphate (HMP-P) moiety of thiamine from aminoimidazole ribotide (AIR) in a radical S-adenosyl-L-methionine (SAM)-dependent reaction. The protein is Phosphomethylpyrimidine synthase of Thermotoga neapolitana (strain ATCC 49049 / DSM 4359 / NBRC 107923 / NS-E).